A 184-amino-acid polypeptide reads, in one-letter code: ATP synthase subunit b 1 (184 aa).

Residues 4–24 (LSILAVLAASPAMAATGPFLS) traverse the membrane as a helical segment.

It belongs to the ATPase B chain family. In terms of assembly, F-type ATPases have 2 components, F(1) - the catalytic core - and F(0) - the membrane proton channel. F(1) has five subunits: alpha(3), beta(3), gamma(1), delta(1), epsilon(1). F(0) has three main subunits: a(1), b(2) and c(10-14). The alpha and beta chains form an alternating ring which encloses part of the gamma chain. F(1) is attached to F(0) by a central stalk formed by the gamma and epsilon chains, while a peripheral stalk is formed by the delta and b chains.

It is found in the cell inner membrane. Functionally, f(1)F(0) ATP synthase produces ATP from ADP in the presence of a proton or sodium gradient. F-type ATPases consist of two structural domains, F(1) containing the extramembraneous catalytic core and F(0) containing the membrane proton channel, linked together by a central stalk and a peripheral stalk. During catalysis, ATP synthesis in the catalytic domain of F(1) is coupled via a rotary mechanism of the central stalk subunits to proton translocation. In terms of biological role, component of the F(0) channel, it forms part of the peripheral stalk, linking F(1) to F(0). The polypeptide is ATP synthase subunit b 1 (Cereibacter sphaeroides (strain ATCC 17029 / ATH 2.4.9) (Rhodobacter sphaeroides)).